We begin with the raw amino-acid sequence, 314 residues long: Olfactory receptor 1Q1 (314 aa).

The Extracellular portion of the chain corresponds to 1–25 (MDNSNWTSVSHFVLLGISTHPEEQI). The N-linked (GlcNAc...) asparagine glycan is linked to Asn-5. A helical membrane pass occupies residues 26–49 (PLFLVFSLMYAINISGNLAIITLI). The Cytoplasmic segment spans residues 50-57 (LSAPRLHI). The chain crosses the membrane as a helical span at residues 58–79 (PMYIFLSNLALTDICFTSTTVP). The Extracellular segment spans residues 80–100 (KMLQIIFSPTKVISYTGCLAQ). A disulfide bridge links Cys-97 with Cys-189. Residues 101–120 (TYFFICFAVMENFILAVMAY) form a helical membrane-spanning segment. Residues 121-139 (DRYIAICHPFHYTMILTRM) are Cytoplasmic-facing. Residues 140–158 (LCVKMVVMCHALSHLHAML) traverse the membrane as a helical segment. Residues 159–195 (HTFLIGQLIFCADNRIPHFFCDLYALMKISCTSTYLN) lie on the Extracellular side of the membrane. Residues 196 to 219 (TLMIHTEGAVVISGALAFITASYA) traverse the membrane as a helical segment. The Cytoplasmic portion of the chain corresponds to 220 to 236 (CIILVVLRIPSAKGRWK). Residues 237–259 (TFSTCGSHLTVVAIFYGTLSWVY) form a helical membrane-spanning segment. At 260-272 (FRPLSSYSVTKGR) the chain is on the extracellular side. A helical membrane pass occupies residues 273–292 (IITVVYTVVTPMLNPFIYSL). Over 293–314 (RNGDVKGGFMKWMSRMQTFFFR) the chain is Cytoplasmic.

Belongs to the G-protein coupled receptor 1 family.

Its subcellular location is the cell membrane. In terms of biological role, odorant receptor. The polypeptide is Olfactory receptor 1Q1 (OR1Q1) (Homo sapiens (Human)).